A 122-amino-acid polypeptide reads, in one-letter code: UPF0382 membrane protein SH2409 (122 aa).

Transmembrane regions (helical) follow at residues 3–23 (LFII…AFGA), 46–66 (MYHG…SINV), 69–89 (AGWL…ILAL), and 98–118 (ITPI…ISTF).

Belongs to the UPF0382 family.

The protein resides in the cell membrane. In Staphylococcus haemolyticus (strain JCSC1435), this protein is UPF0382 membrane protein SH2409.